Reading from the N-terminus, the 272-residue chain is Rhomboid-type serine protease B (272 aa).

5 helical membrane-spanning segments follow: residues 30–50 (IVLLVILAFWLLELQTIWSVV), 72–92 (PFIHVGFFHAFVNLLALTPLL), 103–123 (TAVALFIGPLSTFPAGIYILV), 133–153 (AVVGASVWIFLLLGSEAIKTF), and 164–184 (TKIPTWTSPLFACALVSIFVP). Ser-138 serves as the catalytic Nucleophile. Asn-185 is a glycosylation site (N-linked (GlcNAc...) asparagine). A helical membrane pass occupies residues 186–206 (TSFLGHLSAIIIGYLLGLGYL). His-191 is a catalytic residue.

The protein belongs to the peptidase S54 family.

The protein resides in the membrane. It catalyses the reaction Cleaves type-1 transmembrane domains using a catalytic dyad composed of serine and histidine that are contributed by different transmembrane domains.. In terms of biological role, rhomboid protease that catalyzes intramembrane proteolysis. Required for transcription factor srbA activation by mediating its release from the membrane and thereby regulating its activity under hypoxic conditions. Essential for iron homeostasis and resistance to azoles such as voriconazole. Required for virulence in murine models of invasive pulmonary aspergillosis (IPA). The sequence is that of Rhomboid-type serine protease B from Aspergillus fumigatus (strain CBS 144.89 / FGSC A1163 / CEA10) (Neosartorya fumigata).